Consider the following 466-residue polypeptide: Cysteine--tRNA ligase (466 aa).

Zn(2+) is bound at residue C29. The 'HIGH' region motif lies at 31–41 (PTVYNYIHIGN). Positions 209, 234, and 238 each coordinate Zn(2+). The 'KMSKS' region motif lies at 266–270 (KMSKS). Residue K269 coordinates ATP. S270 is modified (phosphoserine).

Belongs to the class-I aminoacyl-tRNA synthetase family. As to quaternary structure, monomer. Zn(2+) serves as cofactor.

The protein resides in the cytoplasm. The enzyme catalyses tRNA(Cys) + L-cysteine + ATP = L-cysteinyl-tRNA(Cys) + AMP + diphosphate. The protein is Cysteine--tRNA ligase of Bacillus velezensis (strain DSM 23117 / BGSC 10A6 / LMG 26770 / FZB42) (Bacillus amyloliquefaciens subsp. plantarum).